Reading from the N-terminus, the 642-residue chain is Tigger transposable element derived 5 (642 aa).

The segment at 1-54 is disordered; sequence MYPASPPAGPALHPVPHRARLPQPRCLAEPPRSPAPGPGSTARPPPPPAPGPRP. A compositionally biased stretch (pro residues) spans 31–53; sequence PRSPAPGPGSTARPPPPPAPGPR. One can recognise an HTH psq-type domain in the interval 57–108; the sequence is AVKMTFRKAYSIKDKLQAIERVKGGERQASVCRDFGVPGGTLRGWLKDEPKL. DNA-binding regions (H-T-H motif) lie at residues 84–104 and 155–188; these read QASVCRDFGVPGGTLRGWLKD and PVIQAQAEAFARQIYGPECTFKASHGWFWRWQKR. The HTH CENPB-type domain occupies 122 to 195; that stretch reads QRKKMRLANE…QKRHGISSQR (74 aa). Residues 202-238 are disordered; the sequence is SPVAGPAPVKEEPAQSPGAVLVPDGAPATLPHSEGGY. One can recognise a DDE-1 domain in the interval 240-365; the sequence is DEQIYNANVT…CLQQKAVLLV (126 aa). 2 disordered regions span residues 375-400 and 548-581; these read TSMPPLEESEETPRQCQPELLGSPEE and GCREEVAPAAPPSPASLPSSIGAGEEEEEATEQG.

Belongs to the tigger transposable element derived protein family.

It localises to the nucleus. The protein is Tigger transposable element derived 5 (Tigd5) of Mus musculus (Mouse).